The sequence spans 300 residues: Actin-related protein 2/3 complex subunit 2 (300 aa).

K275 and K295 each carry N6-acetyllysine.

It belongs to the ARPC2 family. As to quaternary structure, component of the Arp2/3 complex composed of ACTR2/ARP2, ACTR3/ARP3, ARPC1B/p41-ARC, ARPC2/p34-ARC, ARPC3/p21-ARC, ARPC4/p20-ARC and ARPC5/p16-ARC. Interacts with SHANK3; the interaction probably mediates the association of SHANK3 with the Arp2/3 complex.

It is found in the cytoplasm. Its subcellular location is the cytoskeleton. The protein localises to the cell projection. It localises to the synapse. The protein resides in the synaptosome. It is found in the nucleus. Actin-binding component of the Arp2/3 complex, a multiprotein complex that mediates actin polymerization upon stimulation by nucleation-promoting factor (NPF). The Arp2/3 complex mediates the formation of branched actin networks in the cytoplasm, providing the force for cell motility. Seems to contact the mother actin filament. In addition to its role in the cytoplasmic cytoskeleton, the Arp2/3 complex also promotes actin polymerization in the nucleus, thereby regulating gene transcription and repair of damaged DNA. The Arp2/3 complex promotes homologous recombination (HR) repair in response to DNA damage by promoting nuclear actin polymerization, leading to drive motility of double-strand breaks (DSBs). This Rattus norvegicus (Rat) protein is Actin-related protein 2/3 complex subunit 2.